Consider the following 227-residue polypeptide: PKHD-type hydroxylase BURPS668_A1690 (227 aa).

The 101-residue stretch at 78–178 (KVFPPLFNRY…RVASFFWIQS (101 aa)) folds into the Fe2OG dioxygenase domain. Fe cation contacts are provided by His-96, Asp-98, and His-159. Arg-169 serves as a coordination point for 2-oxoglutarate.

The cofactor is Fe(2+). L-ascorbate serves as cofactor.

This is PKHD-type hydroxylase BURPS668_A1690 from Burkholderia pseudomallei (strain 668).